The sequence spans 859 residues: Cadherin-related family member 1 (859 aa).

A signal peptide spans 1–21 (MRRGPRVALVLGLLRIYLAQA). At 22–701 (NFAPHFFDNG…LIQTKDNPMK (680 aa)) the chain is on the extracellular side. Cadherin domains follow at residues 36 to 135 (NGNM…APRF), 136 to 247 (IQEP…APIF), 248 to 354 (VGTP…PPTF), 360 to 473 (PQNK…VPKF), 474 to 577 (TSHY…YPQF), and 569 to 691 (DVND…MAAF). Asn58 and Asn89 each carry an N-linked (GlcNAc...) asparagine glycan. N-linked (GlcNAc...) asparagine glycosylation occurs at Asn288. Residues 702 to 722 (AVGVLAGVMAIVVAITVLIST) traverse the membrane as a helical segment. The Cytoplasmic segment spans residues 723 to 859 (ATFWRNKKSN…KKSLDNKAYI (137 aa)). Residues 793–838 (PALPPPPKMASSMVAQQTVPTVSGSLTPQPSPQLPTPKTLGGPVQS) are disordered. Positions 805–816 (MVAQQTVPTVSG) are enriched in polar residues.

In terms of assembly, interacts with PROM1. Post-translationally, undergoes proteolytic cleavage; produces a soluble 95 kDa N-terminal fragment and a 25 kDa cell-associated C-terminal fragment. As to expression, expressed in cone and rod photoreceptor cells (at protein level). Expressed in photoreceptor cells of the outer nuclear layer of the retina. Expressed in mitral and tufted cells in the olfactory bulb.

The protein localises to the cell membrane. In terms of biological role, potential calcium-dependent cell-adhesion protein. May be required for the structural integrity of the outer segment (OS) of photoreceptor cells. The chain is Cadherin-related family member 1 (Cdhr1) from Mus musculus (Mouse).